Reading from the N-terminus, the 715-residue chain is Discoidin, CUB and LCCL domain-containing protein 1 (715 aa).

The first 34 residues, 1 to 34, serve as a signal peptide directing secretion; the sequence is MVPGARGGGALARAAGRGLLALLLAVSAPLRLQA. The Extracellular portion of the chain corresponds to 35–459; the sequence is EELGDGCGHL…TSTGINITTV (425 aa). Disulfide bonds link Cys41–Cys68 and Cys94–Cys112. Positions 41–150 constitute a CUB domain; the sequence is CGHLVTYQDS…RGFLLTYASS (110 aa). Asn64 carries an N-linked (GlcNAc...) asparagine glycan. An N-linked (GlcNAc...) asparagine glycan is attached at Asn124. The LCCL domain occupies 152 to 248; sequence HPDLITCLER…RDGSLSDKRF (97 aa). Cystine bridges form between Cys158–Cys174 and Cys178–Cys200. The F5/8 type C domain occupies 248-412; sequence FLFTSNGCSR…IALKVELIGC (165 aa). N-linked (GlcNAc...) asparagine glycosylation is present at Asn277. The disordered stretch occupies residues 278–312; sequence ESGDQVHWSPGQARLQDQGPSWASGDSSNNHKPRE. Polar residues predominate over residues 295–307; it reads QGPSWASGDSSNN. Residues Asn351, Asn418, and Asn455 are each glycosylated (N-linked (GlcNAc...) asparagine). The chain crosses the membrane as a helical span at residues 460–480; that stretch reads AIPLVLLVVLVFAGMGIFAAF. At 481-715 the chain is on the cytoplasmic side; sequence RKKKKKGSPY…LNQTAMTALL (235 aa). At Ser513 the chain carries Phosphoserine. Thr614 is modified (phosphothreonine). The disordered stretch occupies residues 619–702; it reads SGYRVPGPQP…SDSYSAPRDC (84 aa).

It localises to the membrane. This is Discoidin, CUB and LCCL domain-containing protein 1 (DCBLD1) from Homo sapiens (Human).